The following is a 350-amino-acid chain: 3-dehydroquinate synthase (350 aa).

Residues 106 to 110, 130 to 131, Lys-143, and Lys-152 contribute to the NAD(+) site; these read GVIGD and TS. Positions 185, 246, and 263 each coordinate Zn(2+).

It belongs to the sugar phosphate cyclases superfamily. Dehydroquinate synthase family. Requires Co(2+) as cofactor. Zn(2+) is required as a cofactor. The cofactor is NAD(+).

It localises to the cytoplasm. The enzyme catalyses 7-phospho-2-dehydro-3-deoxy-D-arabino-heptonate = 3-dehydroquinate + phosphate. Its pathway is metabolic intermediate biosynthesis; chorismate biosynthesis; chorismate from D-erythrose 4-phosphate and phosphoenolpyruvate: step 2/7. Catalyzes the conversion of 3-deoxy-D-arabino-heptulosonate 7-phosphate (DAHP) to dehydroquinate (DHQ). This chain is 3-dehydroquinate synthase, found in Clostridium botulinum (strain Alaska E43 / Type E3).